The sequence spans 292 residues: Arabinose operon regulatory protein (292 aa).

5 residues coordinate alpha-L-arabinopyanose: P8, T24, R38, Y82, and H93. Residues 180 to 279 (REACQYISDH…GASPSEFRAG (100 aa)) form the HTH araC/xylS-type domain. 2 DNA-binding regions (H-T-H motif) span residues 198-219 (ASVA…RQQL) and 246-269 (IATV…KKCT).

As to quaternary structure, homodimer.

Its subcellular location is the cytoplasm. Its activity is regulated as follows. Arabinose converts the repressor form of AraC to the activator form to regulate the araBAD promoter. In the absence of arabinose, AraC binds to the araO2 and araI1 half-sites in the promoter region of the araBAD operon, leading to the formation of a DNA loop that blocks access of RNA polymerase to the promoter. In the presence of arabinose and the cyclic AMP receptor protein (CRP), it binds to the adjacent half-sites araI1 and araI2, leading to the binding of RNA polymerase to the promoter region and transcription of the araBAD operon. AraI1 acts as a switch mechanism allowing both the repressor and the activator forms of AraC protein to regulate the araBAD promoter. Inhibited by D-fucose, which binds competitively to the same site on the protein. Its function is as follows. Transcription factor that regulates the expression of several genes involved in the transport and metabolism of L-arabinose. Functions both as a positive and a negative regulator. In the presence of arabinose, activates the expression of the araBAD, araE, araFGH and araJ promoters. In the absence of arabinose, negatively regulates the araBAD operon. Represses its own transcription. Acts by binding directly to DNA. This is Arabinose operon regulatory protein from Escherichia coli (strain K12).